The sequence spans 142 residues: Transcriptional regulator MraZ (142 aa).

SpoVT-AbrB domains lie at 5-51 (ASSL…PRPE) and 77-120 (AMDV…DKAT).

This sequence belongs to the MraZ family. In terms of assembly, forms oligomers.

It is found in the cytoplasm. The protein resides in the nucleoid. The protein is Transcriptional regulator MraZ of Variovorax paradoxus (strain S110).